The primary structure comprises 254 residues: MSVSIILMGLFVGALVGLTGVGGAALLTPLLIVLGINPSIAVGTDLVYNSITKLFGVASHWRQKTINFKLVKYLAIGSIPSASLAIGILHLFPAFHQHQEEIIKHALGYVLTLVAISIIVRLFLDRKLRPNRWQLMPLENKRALTILIGVVFGFIVGLTSIGSGSLFAIAMIYLFNMKASQIVGTDIAHAFLLVTAAGILNASFGSVDYMLAANLLLGSIPGVLIGSHLSPRFSPRPLQFIMASIILVSGLKLI.

6 consecutive transmembrane segments (helical) span residues 5–25, 75–95, 105–125, 143–163, 187–207, and 209–229; these read IILMGLFVGALVGLTGVGGAA, AIGSIPSASLAIGILHLFPAF, HALGYVLTLVAISIIVRLFLD, ALTILIGVVFGFIVGLTSIGS, IAHAFLLVTAAGILNASFGSV, and YMLAANLLLGSIPGVLIGSHL.

It belongs to the 4-toluene sulfonate uptake permease (TSUP) (TC 2.A.102) family.

The protein resides in the cell membrane. The polypeptide is Probable membrane transporter protein YjnA (yjnA) (Bacillus subtilis (strain 168)).